Reading from the N-terminus, the 92-residue chain is Large ribosomal subunit protein eL43 (92 aa).

The C4-type zinc-finger motif lies at 39 to 60; sequence CDFCGKYGMKRKAVGIWSCKGC.

Belongs to the eukaryotic ribosomal protein eL43 family.

The chain is Large ribosomal subunit protein eL43 (RPL37a) from Ostreococcus lucimarinus (strain CCE9901).